A 310-amino-acid polypeptide reads, in one-letter code: Glutaminase (310 aa).

Residues S67, N118, E161, N168, Y192, Y244, and V262 each contribute to the substrate site.

Belongs to the glutaminase family. Homotetramer.

It catalyses the reaction L-glutamine + H2O = L-glutamate + NH4(+). The chain is Glutaminase from Legionella pneumophila subsp. pneumophila (strain Philadelphia 1 / ATCC 33152 / DSM 7513).